A 300-amino-acid polypeptide reads, in one-letter code: 4-diphosphocytidyl-2-C-methyl-D-erythritol kinase (300 aa).

K22 is an active-site residue. 105–115 lines the ATP pocket; it reads PMGGGLGGGSS. D147 is a catalytic residue.

The protein belongs to the GHMP kinase family. IspE subfamily.

It carries out the reaction 4-CDP-2-C-methyl-D-erythritol + ATP = 4-CDP-2-C-methyl-D-erythritol 2-phosphate + ADP + H(+). The protein operates within isoprenoid biosynthesis; isopentenyl diphosphate biosynthesis via DXP pathway; isopentenyl diphosphate from 1-deoxy-D-xylulose 5-phosphate: step 3/6. Catalyzes the phosphorylation of the position 2 hydroxy group of 4-diphosphocytidyl-2C-methyl-D-erythritol. The chain is 4-diphosphocytidyl-2-C-methyl-D-erythritol kinase from Colwellia psychrerythraea (strain 34H / ATCC BAA-681) (Vibrio psychroerythus).